The chain runs to 122 residues: Large ribosomal subunit protein uL18 (122 aa).

This sequence belongs to the universal ribosomal protein uL18 family. Part of the 50S ribosomal subunit; part of the 5S rRNA/L5/L18/L25 subcomplex. Contacts the 5S and 23S rRNAs.

Its function is as follows. This is one of the proteins that bind and probably mediate the attachment of the 5S RNA into the large ribosomal subunit, where it forms part of the central protuberance. The sequence is that of Large ribosomal subunit protein uL18 from Mycobacterium tuberculosis (strain ATCC 25177 / H37Ra).